Reading from the N-terminus, the 160-residue chain is Transcription elongation factor GreA (160 aa).

The protein belongs to the GreA/GreB family.

In terms of biological role, necessary for efficient RNA polymerase transcription elongation past template-encoded arresting sites. The arresting sites in DNA have the property of trapping a certain fraction of elongating RNA polymerases that pass through, resulting in locked ternary complexes. Cleavage of the nascent transcript by cleavage factors such as GreA or GreB allows the resumption of elongation from the new 3'terminus. GreA releases sequences of 2 to 3 nucleotides. The chain is Transcription elongation factor GreA from Leuconostoc citreum (strain KM20).